Here is a 305-residue protein sequence, read N- to C-terminus: Porphobilinogen deaminase (305 aa).

Cys-240 bears the S-(dipyrrolylmethanemethyl)cysteine mark.

This sequence belongs to the HMBS family. In terms of assembly, monomer. Requires dipyrromethane as cofactor.

It carries out the reaction 4 porphobilinogen + H2O = hydroxymethylbilane + 4 NH4(+). It participates in porphyrin-containing compound metabolism; protoporphyrin-IX biosynthesis; coproporphyrinogen-III from 5-aminolevulinate: step 2/4. Its function is as follows. Tetrapolymerization of the monopyrrole PBG into the hydroxymethylbilane pre-uroporphyrinogen in several discrete steps. This chain is Porphobilinogen deaminase, found in Xylella fastidiosa (strain M23).